The chain runs to 288 residues: MAAKIIDGKTIAQQVRSEVAQKVQARVAAGLRAPGLAVVLVGSNPASQIYVASKRKACEEVGFVSRSYDLPETTSEAELLELIDVLNADNTIDGILVQLPLPAGIDNVKVLERIHPDKDVDGFHPYNVGRLCQRAPRLRPCTPRGIVTLLERYNIDTFGLNAVVIGASNIVGRPMSMELLLAGCTTTVTHRFTKNLRHHVENADLLIVAVGKPGFIPGDWIKEGAIVIDVGINRLENGKVVGDVVFEDAAKRASYITPVPGGVGPMTVATLIENTLQACVEYHDPQDE.

NADP(+) is bound by residues 166–168 (GAS) and Ile-232.

The protein belongs to the tetrahydrofolate dehydrogenase/cyclohydrolase family. In terms of assembly, homodimer.

It catalyses the reaction (6R)-5,10-methylene-5,6,7,8-tetrahydrofolate + NADP(+) = (6R)-5,10-methenyltetrahydrofolate + NADPH. The enzyme catalyses (6R)-5,10-methenyltetrahydrofolate + H2O = (6R)-10-formyltetrahydrofolate + H(+). It functions in the pathway one-carbon metabolism; tetrahydrofolate interconversion. Functionally, catalyzes the oxidation of 5,10-methylenetetrahydrofolate to 5,10-methenyltetrahydrofolate and then the hydrolysis of 5,10-methenyltetrahydrofolate to 10-formyltetrahydrofolate. The chain is Bifunctional protein FolD from Escherichia fergusonii (strain ATCC 35469 / DSM 13698 / CCUG 18766 / IAM 14443 / JCM 21226 / LMG 7866 / NBRC 102419 / NCTC 12128 / CDC 0568-73).